Here is a 145-residue protein sequence, read N- to C-terminus: uncharacterized protein (145 aa).

This is an uncharacterized protein from Deinococcus radiodurans (strain ATCC 13939 / DSM 20539 / JCM 16871 / CCUG 27074 / LMG 4051 / NBRC 15346 / NCIMB 9279 / VKM B-1422 / R1).